A 187-amino-acid polypeptide reads, in one-letter code: Phosphatidylethanolamine-binding protein 1 (187 aa).

Position 2 is an N-acetylalanine; in peptide hippocampal cholinergic neurostimulating (Ala-2). Phosphoserine occurs at positions 6 and 13. Phosphothreonine is present on Thr-42. 4 positions are modified to phosphoserine: Ser-52, Ser-54, Ser-98, and Ser-153. Residues 93-134 form an interaction with RAF1 region; sequence KGNDISSGTVLSEYVGSGPPKDTGLHRYVWLVYEQEQPLNCD.

Belongs to the phosphatidylethanolamine-binding protein family. Has a tendency to form dimers by disulfide cross-linking. Interacts with RAF1 and this interaction is enhanced if RAF1 is phosphorylated on residues 'Ser-338', 'Ser-339', 'Tyr-340' and 'Tyr-341'. Interacts with ALOX15; in response to IL13/interleukin-13, prevents the interaction of PEBP1 with RAF1 to activate the ERK signaling cascade. As to expression, major component of epididymal secretions and sperm plasma membranes. It is present in cytosols from a variety of other tissues. Highly expressed in brain.

It localises to the cytoplasm. The protein localises to the membrane. In terms of biological role, binds ATP, opioids and phosphatidylethanolamine. Has lower affinity for phosphatidylinositol and phosphatidylcholine. Serine protease inhibitor which inhibits thrombin, neuropsin and chymotrypsin but not trypsin, tissue type plasminogen activator and elastase. Inhibits the kinase activity of RAF1 by inhibiting its activation and by dissociating the RAF1/MEK complex and acting as a competitive inhibitor of MEK phosphorylation. HCNP may be involved in the function of the presynaptic cholinergic neurons of the central nervous system. HCNP increases the production of choline acetyltransferase but not acetylcholinesterase. Seems to be mediated by a specific receptor. The protein is Phosphatidylethanolamine-binding protein 1 (Pebp1) of Rattus norvegicus (Rat).